Reading from the N-terminus, the 235-residue chain is Ribitol-5-phosphate cytidylyltransferase (235 aa).

CTP-binding positions include 7–10, 82–88, and serine 113; these read LAGG and GADRNTS.

This sequence belongs to the IspD/TarI cytidylyltransferase family. TarI subfamily.

It carries out the reaction D-ribitol 5-phosphate + CTP + H(+) = CDP-L-ribitol + diphosphate. It participates in cell wall biogenesis; poly(ribitol phosphate) teichoic acid biosynthesis. In terms of biological role, catalyzes the transfer of the cytidylyl group of CTP to D-ribitol 5-phosphate. The sequence is that of Ribitol-5-phosphate cytidylyltransferase from Streptococcus pneumoniae (strain Hungary19A-6).